Reading from the N-terminus, the 853-residue chain is Thrombospondin type-1 domain-containing protein 1 (853 aa).

A signal peptide spans 1–24; it reads MKPMLKDFSNLLLVVLCDYVLGEA. The Extracellular portion of the chain corresponds to 25–414; that stretch reads EYLLLREPGH…QPQGPVKSNN (390 aa). N-linked (GlcNAc...) asparagine glycosylation is found at Asn-39, Asn-53, Asn-58, Asn-69, Asn-80, Asn-135, and Asn-304. One can recognise a TSP type-1 domain in the interval 341–394; sequence IETWGLWQPWSQCSATCGDGVRERRRVCLTSFPSRPGCPGMSLEASLCSLEECA. Intrachain disulfides connect Cys-353–Cys-388, Cys-357–Cys-393, and Cys-368–Cys-378. The helical transmembrane segment at 415–435 threads the bilayer; it reads IVTVTGISLCLFIIIATVLIT. Residues 436–853 are Cytoplasmic-facing; that stretch reads LWRRFGRPAK…STLSVEKLVI (418 aa). Disordered regions lie at residues 445-518, 624-650, 668-702, and 714-800; these read KCST…ESFQ, TLIR…RNAH, ERSM…QSRG, and QEAS…RKDK. Ser-464 is modified (phosphoserine). Residues 671–686 are compositionally biased toward polar residues; that stretch reads MSTLTPRQAPAYSTRT. Positions 687–697 are enriched in basic and acidic residues; the sequence is RTCEQAEDRFR. Residues 767 to 795 are compositionally biased toward polar residues; sequence SHKSVSRKQSSPTSPKDSYQRVSPLSPSQ.

Part of a complex composed of THSD1, PTK2/FAK1, TLN1 and VCL. Interacts with TLN1.

The protein resides in the endosome membrane. Its subcellular location is the cell junction. It is found in the focal adhesion. Is a positive regulator of nascent focal adhesion assembly, involved in the modulation of endothelial cell attachment to the extracellular matrix. The sequence is that of Thrombospondin type-1 domain-containing protein 1 (THSD1) from Pongo abelii (Sumatran orangutan).